The chain runs to 33 residues: MSDIN-like toxin proprotein 5 (33 aa).

Positions 1 to 10 (MSDINATRLP) are excised as a propeptide. Residues 11–18 (IFWFIYFP) constitute a cross-link (cyclopeptide (Ile-Pro)). A propeptide spanning residues 19–32 (CVGDNVDNTLTRGE) is cleaved from the precursor.

The protein belongs to the MSDIN fungal toxin family. In terms of processing, processed by the macrocyclase-peptidase enzyme POPB to yield a toxic cyclic octapeptide. POPB first removes 10 residues from the N-terminus. Conformational trapping of the remaining peptide forces the enzyme to release this intermediate rather than proceed to macrocyclization. The enzyme rebinds the remaining peptide in a different conformation and catalyzes macrocyclization of the N-terminal 8 residues.

Probable toxin that belongs to the MSDIN-like toxin family responsible for a large number of food poisoning cases and deaths. The polypeptide is MSDIN-like toxin proprotein 5 (Amanita phalloides (Death cap)).